Reading from the N-terminus, the 303-residue chain is Catechol 1,2-dioxygenase (303 aa).

The Fe cation site is built by Tyr156, Tyr191, His215, and His217.

Homodimer. Fe(3+) is required as a cofactor.

The catalysed reaction is catechol + O2 = cis,cis-muconate + 2 H(+). Its pathway is aromatic compound metabolism; beta-ketoadipate pathway; 5-oxo-4,5-dihydro-2-furylacetate from catechol: step 1/3. Inhibited by Ag(+), Cu(+), Hg(2+) and Pb(2+). Can cleave 4-methylcatechol at lower rates than catechol, but has no activity with 3-methylcatechol, 4-chlorocatechol, 4-carboxycatechol or hydroxyquinol. The polypeptide is Catechol 1,2-dioxygenase (HQD2) (Candida albicans (strain SC5314 / ATCC MYA-2876) (Yeast)).